The sequence spans 299 residues: B3 domain-containing transcription factor NGA2 (299 aa).

Positions 1 to 21 are disordered; it reads MNQEDKEKPIEEASSSMEREH. The TF-B3 DNA-binding region spans 23 to 129; that stretch reads FDKVVTPSDV…KLYIDWRRRP (107 aa). The interval 226–249 is disordered; the sequence is GGGGSVNSTEEESSSSGGSIPRGR.

It is found in the nucleus. In terms of biological role, regulates lateral organ growth. Functionally redundant with NGA1, NGA3 and NGA4. This chain is B3 domain-containing transcription factor NGA2 (NGA2), found in Arabidopsis thaliana (Mouse-ear cress).